The sequence spans 458 residues: Transcription factor PCF5 (458 aa).

4 disordered regions span residues 1-103, 159-182, 278-299, and 424-458; these read MGDA…RGPR, GAGA…ENSD, MFHH…TTQQ, and RLPA…ASHH. Positions 65-74 are enriched in gly residues; that stretch reads RGGGGGGGGE. The region spanning 89 to 147 is the TCP domain; that stretch reads RKDRHSKVCTARGPRDRRVRLSAHTAIQFYDVQDRLGYDRPSKAVDWLIKNAKDAIDKL.

As to quaternary structure, forms homodimers and heterodimers.

It is found in the nucleus. Transcription activator. Binds the promoter core sequence 5'-GGNCC-3'. This Oryza sativa subsp. japonica (Rice) protein is Transcription factor PCF5 (PCF5).